We begin with the raw amino-acid sequence, 217 residues long: Growth factor receptor-bound protein 2 (217 aa).

N-acetylmethionine is present on M1. Residues 1–58 (MEAIAKYDFKATADDELSFKRGDILKVLNEECDQNWYKAELNGKDGFIPKNYIEMKPH) enclose the SH3 1 domain. Residues K6, K50, and K109 each carry the N6-acetyllysine modification. An SH2 domain is found at 60–152 (WFFGKIPRAK…NQQIFLRDIE (93 aa)). Residue K109 forms a Glycyl lysine isopeptide (Lys-Gly) (interchain with G-Cter in ubiquitin) linkage. In terms of domain architecture, SH3 2 spans 156 to 215 (QQPTYVQALFDFDPQEDGELGFRRGDFIHVMDNSDPNWWKGACHGQTGMFPRNYVTPVNR). A Phosphotyrosine modification is found at Y209. A Phosphothreonine modification is found at T211.

The protein belongs to the GRB2/sem-5/DRK family. In terms of assembly, homodimer. Associates (via SH2 domain) with activated EGF and PDGF receptors (tyrosine phosphorylated). Interacts with PDGFRA (tyrosine phosphorylated); the interaction may be indirect. Also associates to other cellular Tyr-phosphorylated proteins such as SIT1, IRS1, IRS2, IRS4, SHC and LNK; probably via the concerted action of both its SH2 and SH3 domains. It also seems to interact with RAS in the signaling pathway leading to DNA synthesis. Interacts with SOS1. Forms a complex with MUC1 and SOS1, through interaction of the SH3 domains with SOS1 and the SH2 domain with phosphorylated MUC1. Interacts with phosphorylated MET. Interacts with phosphorylated TOM1L1. Interacts with the phosphorylated C-terminus of SH2B2. Interacts with phosphorylated SIT1, LAX1, LAT, LAT2 and LIME1 upon TCR and/or BCR activation. Interacts with NISCH, PTPNS1 and REPS2. Interacts with syntrophin SNTA1. Interacts (via SH3 domains) with REPS1. Interacts (via SH3 domains) with PIK3C2B. Interacts with CBL and CBLB. Interacts with AJUBA and CLNK. Interacts (via SH2 domain) with TEK/TIE2 (tyrosine phosphorylated). Interacts with SHB, INPP5D/SHIP1, SKAP1 and SKAP2. Interacts with PTPN11. Interacts with PRNP. Interacts with RALGPS1. Interacts with HCST. Interacts with KDR. Interacts with FLT1 (tyrosine-phosphorylated). Interacts with GAPT and PTPRE. Interacts (via SH2 domain) with KIF26A. Interacts (via SH3 2) with GAB2. Interacts with ADAM15. Interacts with THEMIS2. Interacts (via SH2 domain) with AXL (phosphorylated). Interacts (via SH2 domain) with KIT (phosphorylated). Interacts with PTPRJ and BCR. Interacts with PTPN23. Interacts with FLT4 (tyrosine phosphorylated). Interacts with EPHB1 and SHC1; activates the MAPK/ERK cascade to regulate cell migration. Part of a complex including TNK2, GRB2, LTK and one receptor tyrosine kinase (RTK) such as AXL and PDGFRL, in which GRB2 promotes RTK recruitment by TNK2. Interacts (via SH2 domain) with CSF1R (tyrosine phosphorylated). Interacts with ERBB4. Interacts with NTRK1 (phosphorylated upon ligand-binding). Interacts with PTK2/FAK1 (tyrosine phosphorylated). Interacts with PTK2B/PYK2 (tyrosine phosphorylated). Interacts (via SH3 domains) with GAREM1 isoform 1 (via proline-rich domain and tyrosine phosphorylated); the interaction occurs upon EGF stimulation. Interacts with DAB2. Interacts with TESPA1. Interacts with PLCG1, LAT and THEMIS upon TCR activation in thymocytes; the association is weaker in the absence of TESPA1. Interacts with CD28. Interacts with RAB13; may recruit RAB13 to the leading edge of migrating endothelial cells where it can activate RHOA. Interacts with ASAP3 (phosphorylated form). Interacts (via SH2 domain) with PTPRH (phosphorylated form). Interacts with PTPRO (phosphorylated form). Interacts with PTPRB (phosphorylated form). Interacts (via SH3 domain 2) with PRR14 (via proline-rich region). Interacts with FCRL6 (tyrosine phosphorylated form). Interacts with RHEX (via tyrosine-phosphorylated form). Interacts with DENND2B. Interacts with SPRY2. Interacts with LRRC8A. Interacts with PEAK1. Interacts with CD28. Interacts with FCRL1. Interacts with PCNA. Interacts with CD19. Interacts with BECN1. Interacts with RAD51; the interaction inhibits RAD51 ATPase to stabilize RAD51-DNA complex at stalled replication forks. Interacts with MRE11; this interaction recruits MRE11 to the DNA damage sites. Interacts with RIPK1 ans SQSTM1; these interactions play a critical role in regulating programmed necrosis. Interacts with AGO2; this interaction is important for the formation of a ternary complex containing GRB2, AGO2 and DICER1. Interacts with TIGIT; this interaction inhibits PI3K and MAPK signaling cascades. Interacts with CD226; this interaction leads to activation of VAV1, PI3K and PLCG1. Interacts (via SH2-domain) with SCIMP; this interaction is dependent on phosphorylation of SCIMP 'Tyr-69'. As to quaternary structure, interacts with SOS1; this interaction competes with GRB2 to bind SOS1 via its N-terminal SH3 domain. In terms of assembly, (Microbial infection) Interacts (via SH3 domain) with hepatitis E virus/HEV ORF3 protein. (Microbial infection) Interacts with hepatitis C virus/HCV protein NS5A via its SH3 domains. As to quaternary structure, (Microbial infection) Interacts with herpes simplex virus 1 protein UL46. In terms of assembly, (Microbial infection) Interacts with B19 parvovirus protein 11K. In terms of processing, phosphorylation of Tyr-209 in the C-terminal SH3 domain reduces its binding to SOS1. Ubiquitinated by RNF173, leading to proteasomal degradation and inhibition of the RAF/MEK/ERK pathway. In the nucleus, polyubiquitinated by RBBP6 at Lys-109 at DNA damage sites.

Its subcellular location is the nucleus. It localises to the cytoplasm. The protein resides in the endosome. The protein localises to the golgi apparatus. Non-enzymatic adapter protein that plays a pivotal role in precisely regulated signaling cascades from cell surface receptors to cellular responses, including signaling transduction and gene expression. Thus, participates in many biological processes including regulation of innate and adaptive immunity, autophagy, DNA repair or necroptosis. Controls signaling complexes at the T-cell antigen receptor to facilitate the activation, differentiation, and function of T-cells. Mechanistically, engagement of the TCR leads to phosphorylation of the adapter protein LAT, which serves as docking site for GRB2. In turn, GRB2 establishes a a connection with SOS1 that acts as a guanine nucleotide exchange factor and serves as a critical regulator of KRAS/RAF1 leading to MAPKs translocation to the nucleus and activation. Functions also a role in B-cell activation by amplifying Ca(2+) mobilization and activation of the ERK MAP kinase pathway upon recruitment to the phosphorylated B-cell antigen receptor (BCR). Plays a role in switching between autophagy and programmed necrosis upstream of EGFR by interacting with components of necrosomes including RIPK1 and with autophagy regulators SQSTM1 and BECN1. Regulates miRNA biogenesis by forming a functional ternary complex with AGO2 and DICER1. Functions in the replication stress response by protecting DNA at stalled replication forks from MRE11-mediated degradation. Mechanistically, inhibits RAD51 ATPase activity to stabilize RAD51 on stalled replication forks. Additionally, directly recruits and later releases MRE11 at DNA damage sites during the homology-directed repair (HDR) process. Its function is as follows. Does not bind to phosphorylated epidermal growth factor receptor (EGFR) but inhibits EGF-induced transactivation of a RAS-responsive element. Acts as a dominant negative protein over GRB2 and by suppressing proliferative signals, may trigger active programmed cell death. Mechanistically, inhibits RAS-ERK signaling and downstream cell proliferation by competing with GRB2 for SOS1 binding and thus by regulating SOS1 membrane recruitment. The protein is Growth factor receptor-bound protein 2 (GRB2) of Homo sapiens (Human).